Reading from the N-terminus, the 309-residue chain is ATP synthase gamma chain (309 aa).

The protein belongs to the ATPase gamma chain family. In terms of assembly, F-type ATPases have 2 components, CF(1) - the catalytic core - and CF(0) - the membrane proton channel. CF(1) has five subunits: alpha(3), beta(3), gamma(1), delta(1), epsilon(1). CF(0) has three main subunits: a, b and c.

It is found in the cell membrane. Functionally, produces ATP from ADP in the presence of a proton gradient across the membrane. The gamma chain is believed to be important in regulating ATPase activity and the flow of protons through the CF(0) complex. This is ATP synthase gamma chain from Salinispora arenicola (strain CNS-205).